A 227-amino-acid polypeptide reads, in one-letter code: NAD(P)H-quinone oxidoreductase subunit K, chloroplastic (227 aa).

[4Fe-4S] cluster contacts are provided by Cys43, Cys44, Cys108, and Cys139.

Belongs to the complex I 20 kDa subunit family. NDH is composed of at least 16 different subunits, 5 of which are encoded in the nucleus. [4Fe-4S] cluster is required as a cofactor.

The protein resides in the plastid. Its subcellular location is the chloroplast thylakoid membrane. It carries out the reaction a plastoquinone + NADH + (n+1) H(+)(in) = a plastoquinol + NAD(+) + n H(+)(out). The enzyme catalyses a plastoquinone + NADPH + (n+1) H(+)(in) = a plastoquinol + NADP(+) + n H(+)(out). Functionally, NDH shuttles electrons from NAD(P)H:plastoquinone, via FMN and iron-sulfur (Fe-S) centers, to quinones in the photosynthetic chain and possibly in a chloroplast respiratory chain. The immediate electron acceptor for the enzyme in this species is believed to be plastoquinone. Couples the redox reaction to proton translocation, and thus conserves the redox energy in a proton gradient. This Citrus sinensis (Sweet orange) protein is NAD(P)H-quinone oxidoreductase subunit K, chloroplastic.